The following is a 163-amino-acid chain: Keratin-associated protein 11-1 (163 aa).

A run of 4 repeats spans residues Cys-111 to Val-120, Cys-121 to Val-130, Cys-131 to Val-140, and Cys-141 to Thr-150. The 4 X 10 AA approximate repeats stretch occupies residues Cys-111–Thr-150.

This sequence belongs to the PMG family. In terms of tissue distribution, expressed in the upper matrix and in the entire hair cortex.

In terms of biological role, in the hair cortex, hair keratin intermediate filaments are embedded in an interfilamentous matrix, consisting of hair keratin-associated proteins (KRTAP), which are essential for the formation of a rigid and resistant hair shaft through their extensive disulfide bond cross-linking with abundant cysteine residues of hair keratins. The matrix proteins include the high-sulfur and high-glycine-tyrosine keratins. The sequence is that of Keratin-associated protein 11-1 (KRTAP11-1) from Homo sapiens (Human).